A 444-amino-acid polypeptide reads, in one-letter code: Ribosome biogenesis protein YTM1 (444 aa).

Positions valine 8 to arginine 89 are ubiquitin-like (UBL) domain. WD repeat units follow at residues serine 99–tyrosine 138, glycine 140–isoleucine 178, glycine 194–isoleucine 231, serine 269–threonine 309, threonine 311–isoleucine 350, glycine 357–threonine 397, and glycine 408–asparagine 444. Residues serine 99–asparagine 444 form a sufficient for interaction with ERB1 and association with 66S pre-ribosomes region.

Belongs to the WD repeat WDR12/YTM1 family. Component of the NOP7 complex, composed of ERB1, NOP7 and YTM1. The complex is held together by ERB1, which interacts with NOP7 via its N-terminal domain and with YTM1 via a high-affinity interaction between the seven-bladed beta-propeller domains of the 2 proteins. The NOP7 complex associates with the 66S pre-ribosome. Interacts (via UBL domain) with MDN1 (via VWFA/MIDAS domain).

Its subcellular location is the nucleus. The protein resides in the nucleolus. The protein localises to the nucleoplasm. Its function is as follows. Component of the NOP7 complex, which is required for maturation of the 25S and 5.8S ribosomal RNAs and formation of the 60S ribosome. In Kluyveromyces lactis (strain ATCC 8585 / CBS 2359 / DSM 70799 / NBRC 1267 / NRRL Y-1140 / WM37) (Yeast), this protein is Ribosome biogenesis protein YTM1.